A 1047-amino-acid polypeptide reads, in one-letter code: MEPETPEKVDSAQEKVRGKTPTADDSDDSREKTGIEEKGELTDAYQLQVAEEMAKEIKKKIRKKLKEQLTYFPPDTLLHDDKLASEKRKKKKKKVPVPTKPESSPSDVCDSAVEGEQKKEGTPEDSQHMEGICSREQDVDATVPENAKPKPKKTKKKTKAVSNDNEDTNGDGVHEITSRDSPVHPKCLLDDDLVMGVYIHRTDRLKSDFMISHPMVKIHVVDEHTGQYVKKDDSERPVSSYYEKDNVDYILPIMTQPYDFKKLKSRLPEWEEQVIFNENFPYLLREFEECPKVILFFEILDFLSMDEIKNNSEVQNQECGFRKIAWAFLKLLGANGNANINSKLRLQLYYPPTKPRSQLNVVEVFEWWSKCPRNRYPSTLYVTVRGLKVPDCIKPSYRSMMALQEERGTPVYCERHRETSSVDTEPGLEDSKEEVKWKRLPGQACRIPNKHLFSLNAGERGCFCLDFSHNGRILAAACASRDGYPIILYEIPSGRFMRELCGHLNIIYDLDWSKDDRYLVTSSSDGTARVWKNEINSTSTFRVLPHPSFVYTAKFHPATRELVVTGCYDSMIRIWKIDAREDAAILVRQLDVHKSFVNSICFDDEGHHMYSGDCIGVIVVWDTYVKVNDVQTSVRHWTINKEIKETEFRGVPISYLEVHPNGKRLLIHTKDSTLRIMDLRILAARKFVGAANYREKIHSTLTPCGTLLFSGSEDGIVYVWNPETGEQVAMYSDLPFKSTIRDISYHPLENMVAFCAFGQSEPILLYIYDFQVAQQEAEMLKRYSGTLPLPGIHQSEDALCTCPKLPQQGSFQIDEFVNTENSSSRKIQLVKQRLETVTEVIRSCAAKVNKNLSMTSPPPGPAKKPRVKQSFVLTTDEIIHQFGLPQTAFISIERGPFVRHVDPPPMVVALYDYTASRSDELTIHRGDIIRVYFKDNEDWWYGSVRKGQEGFFPANHVASETLYRDSPPKVKERSPPLTPKEKTKPEKPLASQKQSLSKGRPLDPRLGPQPVGHSEKGKDQNVEDRGHKVDMETKKSEPVVRKVTLIE.

3 stretches are compositionally biased toward basic and acidic residues: residues 1–17, 29–40, and 77–86; these read MEPE…EKVR, SREKTGIEEKGE, and LLHDDKLASE. Disordered regions lie at residues 1-40 and 67-181; these read MEPE…EKGE and EQLT…SRDS. An interaction with HAP1 region spans residues 1–284; that stretch reads MEPETPEKVD…IFNENFPYLL (284 aa). The segment covering 96-106 has biased composition (low complexity); the sequence is PVPTKPESSPS. Residues 115–138 are compositionally biased toward basic and acidic residues; that stretch reads GEQKKEGTPEDSQHMEGICSREQD. Residues 149-159 show a composition bias toward basic residues; that stretch reads PKPKKTKKKTK. The span at 172 to 181 shows a compositional bias: basic and acidic residues; that stretch reads GVHEITSRDS. WD repeat units lie at residues 457–499, 502–541, 545–585, 592–631, 648–687, 691–730, and 735–776; these read AGER…FMRE, GHLN…TSTF, PHPS…DAAI, VHKS…NDVQ, FRGV…ARKF, ANYR…QVAM, and PFKS…AQQE. At S853 the chain carries Phosphoserine. The SH3 domain maps to 902–962; sequence DPPPMVVALY…PANHVASETL (61 aa). Basic and acidic residues-rich tracts occupy residues 963 to 987 and 1013 to 1040; these read YRDS…KPEK and HSEK…EPVV. Residues 963–1047 form a disordered region; sequence YRDSPPKVKE…PVVRKVTLIE (85 aa). At S974 the chain carries Phosphoserine.

In terms of assembly, self-associates. Part of the tectonic-like complex (also named B9 complex). Interacts with MKS1. Interacts with NPHP1; probably as heterodimers and/or AHI1(2):NPHP1(2) heterotetramers. Interacts (via SH3 domain) with the dynamin GTPase DNM2. Interacts with HAP1; probably as AHI1(2):HAP1(2) heterotetramers. Interacts with RAB8A. Interacts with CEND1. Interacts with SPATA7. As to expression, expressed in the retina (at protein level). Highly expressed in the brain. Highly expressed in the testis. Expressed in the kidney, thymus, heart, lung, spleen. Weakly expressed in the liver, stomach, pancreas, and embryo. Strongly expressed during periods of both cortical and cerebellar development.

It localises to the cytoplasm. It is found in the cytoskeleton. Its subcellular location is the cilium basal body. The protein localises to the microtubule organizing center. The protein resides in the centrosome. It localises to the centriole. It is found in the cell junction. Its subcellular location is the adherens junction. Functionally, involved in vesicle trafficking and required for ciliogenesis, formation of primary non-motile cilium, and recruitment of RAB8A to the basal body of primary cilium. Component of the tectonic-like complex, a complex localized at the transition zone of primary cilia and acting as a barrier that prevents diffusion of transmembrane proteins between the cilia and plasma membranes. Involved in neuronal differentiation. As a positive modulator of classical Wnt signaling, may play a crucial role in ciliary signaling during cerebellum embryonic development. The protein is Jouberin (Ahi1) of Mus musculus (Mouse).